We begin with the raw amino-acid sequence, 1138 residues long: Trafficking protein particle complex subunit 9 (1138 aa).

A phosphoserine mark is found at serine 557 and serine 944.

Belongs to the NIBP family. As to quaternary structure, component of the multisubunit TRAPP (transport protein particle) complex, which includes at least TRAPPC2, TRAPPC2L, TRAPPC3, TRAPPC3L, TRAPPC4, TRAPPC5, TRAPPC8, TRAPPC9, TRAPPC10, TRAPPC11 and TRAPPC12. Directly interacts with IKBKB and MAP3K14.

The protein resides in the golgi apparatus. Its subcellular location is the cis-Golgi network. It is found in the endoplasmic reticulum. It localises to the cytoplasm. Functions as an activator of NF-kappa-B through increased phosphorylation of the IKK complex. May function in neuronal cells differentiation. May play a role in vesicular transport from endoplasmic reticulum to Golgi. In Bos taurus (Bovine), this protein is Trafficking protein particle complex subunit 9 (TRAPPC9).